We begin with the raw amino-acid sequence, 1028 residues long: Contactin-6 (1028 aa).

A signal peptide spans 1-19 (MRLLWKLVILLPLINSCAG). 6 Ig-like C2-type domains span residues 32–117 (PQDV…AKLQ), 122–208 (EDFE…RSVQ), 227–308 (PKIE…RNLA), 318–402 (PEWE…AELR), 408–502 (PDFS…RTII), and 500–587 (TIIT…ERLS). Intrachain disulfides connect cysteine 50-cysteine 100, cysteine 144-cysteine 196, cysteine 249-cysteine 297, cysteine 339-cysteine 386, cysteine 431-cysteine 479, and cysteine 521-cysteine 577. 2 N-linked (GlcNAc...) asparagine glycosylation sites follow: asparagine 65 and asparagine 193. Residues asparagine 368, asparagine 377, and asparagine 468 are each glycosylated (N-linked (GlcNAc...) asparagine). 4 consecutive Fibronectin type-III domains span residues 600 to 698 (PPED…TKAS), 703 to 800 (APGN…SGED), 805 to 901 (APRG…TKKS), and 902 to 996 (PPSQ…KMSS). 4 N-linked (GlcNAc...) asparagine glycosylation sites follow: asparagine 659, asparagine 765, asparagine 860, and asparagine 865. A Phosphotyrosine modification is found at tyrosine 882. Asparagine 895, asparagine 931, asparagine 956, and asparagine 957 each carry an N-linked (GlcNAc...) asparagine glycan. Serine 999 is lipidated: GPI-anchor amidated serine. Residues 1000 to 1028 (TGVQISKPSTQSLSMVGVFYCFAIHPLSR) constitute a propeptide, removed in mature form.

Belongs to the immunoglobulin superfamily. Contactin family. Interacts with PTPRG. As to expression, expressed in brain. In brain, it is preferentially expressed in the accessory olfactory bulb, layers II/III and V of the cerebral cortex, piriform cortex, anterior thalamic nuclei, locus coeruleus of the pons and mesencephalic trigeminal nucleus and in Purkinje cells of the cerebellum.

The protein resides in the cell membrane. In terms of biological role, contactins mediate cell surface interactions during nervous system development. Participates in oligodendrocytes generation by acting as a ligand of NOTCH1. Its association with NOTCH1 promotes NOTCH1 activation through the released notch intracellular domain (NICD) and subsequent translocation to the nucleus. Involved in motor coordination. This chain is Contactin-6 (Cntn6), found in Mus musculus (Mouse).